Consider the following 258-residue polypeptide: NAD kinase (258 aa).

Catalysis depends on Asp51, which acts as the Proton acceptor. NAD(+) contacts are provided by residues 51 to 52, 119 to 120, Lys130, Asp149, 160 to 165, and Ala184; these read DG, ND, and TAYSLS.

This sequence belongs to the NAD kinase family. Homodimer. A divalent metal cation is required as a cofactor.

The protein localises to the cytoplasm. It carries out the reaction NAD(+) + ATP = ADP + NADP(+) + H(+). Involved in the regulation of the intracellular balance between NAD(H) and NADP(H), and is a key enzyme in the biosynthesis of NADP. Catalyzes specifically the phosphorylation on 2'-hydroxyl of the adenosine moiety of NAD to yield NADP. This is NAD kinase (NADK) from Thermotoga maritima (strain ATCC 43589 / DSM 3109 / JCM 10099 / NBRC 100826 / MSB8).